A 777-amino-acid polypeptide reads, in one-letter code: Rho-GTPase-activating protein 8 (777 aa).

An F-BAR domain is found at 3-420; that stretch reads SSFSNGFWSK…YQEIIQPESD (418 aa). The stretch at 117-172 forms a coiled coil; it reads QKLQTSQQVLTNQIKSYEKKYYTLKKTKSAYYNKCRNLEDYEEESKESNETTSEAI. A DEP domain is found at 213 to 296; sequence VLQEIPLQDY…WKDKAFQFAG (84 aa). Residues 454 to 650 enclose the Rho-GAP domain; the sequence is VDVEFLSHRD…DLLTYGPSIF (197 aa). The tract at residues 667–709 is disordered; the sequence is LYQSSATPRSTDVSPTRPDSISSVRSHTAVESPRSSFEELQPS. Over residues 668–692 the composition is skewed to polar residues; the sequence is YQSSATPRSTDVSPTRPDSISSVRS. Residues Ser676 and Ser680 each carry the phosphoserine modification. Thr682 is modified (phosphothreonine). Ser686 is modified (phosphoserine). A Phosphothreonine modification is found at Thr694. Residue Ser698 is modified to Phosphoserine.

As to quaternary structure, interacts with pak1/shk1. Post-translationally, phosphorylated by pak1/shk1.

The protein resides in the cytoplasm. In terms of biological role, acts in signal transduction. Negatively regulates the pak1/shk1 control pathway. The protein is Rho-GTPase-activating protein 8 (rga8) of Schizosaccharomyces pombe (strain 972 / ATCC 24843) (Fission yeast).